A 308-amino-acid chain; its full sequence is Paired box protein 3 homolog (308 aa).

Positions 13–140 form a DNA-binding region, paired; it reads GQGRVNQLGG…PAIKRLIGNK (128 aa). The PAI subdomain stretch occupies residues 16 to 72; it reads RVNQLGGVFINGRPLPIHVRHAIISMAKKGIKPCHISRQLKVSHGAVSKILNRYAET. Residues 92–140 form an RED subdomain region; the sequence is AVEKEILIACDENPQMSAAELRDWLIHKDICTKGNAPTVPAIKRLIGNK. The interval 168-191 is disordered; that stretch reads CSKSSSDDEEGSSPSNDASSRRNR. Residues 187–246 constitute a DNA-binding region (homeobox); that stretch reads SRRNRTSFTAEQLDVLENAFRADTYPHANARESISKETGLSEEKIMTWFSNRRARCRKNM.

It belongs to the paired homeobox family.

The protein localises to the nucleus. Transcriptional activator. Regulates the lateral/ventral epidermal cell fate decision. This chain is Paired box protein 3 homolog, found in Caenorhabditis elegans.